A 461-amino-acid chain; its full sequence is Arginine biosynthesis bifunctional protein ArgJ, chloroplastic (461 aa).

Substrate is bound by residues Thr202, Lys228, Thr239, Glu326, Asn456, and Thr461. The active-site Nucleophile is Thr239.

The protein belongs to the ArgJ family. As to quaternary structure, heterodimer of an alpha and a beta chain.

It is found in the plastid. The protein resides in the chloroplast. The enzyme catalyses N(2)-acetyl-L-ornithine + L-glutamate = N-acetyl-L-glutamate + L-ornithine. It catalyses the reaction L-glutamate + acetyl-CoA = N-acetyl-L-glutamate + CoA + H(+). Its pathway is amino-acid biosynthesis; L-arginine biosynthesis; L-ornithine and N-acetyl-L-glutamate from L-glutamate and N(2)-acetyl-L-ornithine (cyclic): step 1/1. It functions in the pathway amino-acid biosynthesis; L-arginine biosynthesis; N(2)-acetyl-L-ornithine from L-glutamate: step 1/4. Its function is as follows. Catalyzes two activities which are involved in the cyclic version of arginine biosynthesis: the synthesis of acetylglutamate from glutamate and acetyl-CoA, and of ornithine by transacetylation between acetylornithine and glutamate. This Ostreococcus lucimarinus (strain CCE9901) protein is Arginine biosynthesis bifunctional protein ArgJ, chloroplastic.